The primary structure comprises 555 residues: Carboxysome assembly protein CcmM (555 aa).

Residues 1–209 (MAVRSTAAPP…CIAPLRNDQV (209 aa)) form a has carbonic anhydrase (CA) activity region. Glu56 acts as the Proton donor/acceptor in catalysis. Zn(2+) is bound by residues His75, His102, and His107. Cys194 and Cys200 are disulfide-bonded. The tract at residues 223–315 (SSEVASNSLG…RVLETIIQRP (93 aa)) is rbcS-like repeat 1, SSUL1. Disordered regions lie at residues 323 to 351 (TSFK…SNGA) and 441 to 464 (NGQV…SGTA). 2 stretches are compositionally biased toward low complexity: residues 330–351 (SNTN…SNGA) and 445–464 (APSS…SGTA). Residues 347-440 (YSNGATSGKV…RVLESIIQRP (94 aa)) are rbcS-like repeat 2, SSUL2. Positions 460 to 555 (SSGTATATAT…RVLETIIQRP (96 aa)) are rbcS-like repeat 3, SSUL3.

Belongs to the gamma-class carbonic anhydrase family. In terms of assembly, probable homotrimer; zinc is bound between adjacent monomers. Full length protein (M58) interacts with CcmN. The C-terminal RbcS-like domains (SSUL) bind to holo-RuBisCO, as does the M35 short form. The cofactor is Zn(2+). Post-translationally, the first amino acid of the short form (equivalent to Val-226) is not seen in Edman degradation, while Ser-230 may be post-translationally modified. Migrates in gels as 2 about equal forms of about 60 and 35 kDa (called M58 and M35). They are probably the result of alternative translation initiation.

Its subcellular location is the carboxysome. The protein localises to the cytoplasm. The catalysed reaction is hydrogencarbonate + H(+) = CO2 + H2O. With respect to regulation, carbonic anhydrase (CA) activity is probably under redox control to remain inactive in the cytoplasm. Carbonic anhydrase (CA) activity of full-length protein and N-terminal fragment is inhibited by ethoxyzolamide. N-terminal fragment CA activity is activated under oxidizing conditions and inhibited under reducing conditions. Its function is as follows. Functions as a scaffold protein for the assembly of beta-carboxysomes, initiates carboxysome assembly by coalescing RuBisCO (ribulose bisphosphate carboxylase, rbcL-rbcS). Produced as a full-length (M58) and a short form (M35), possibly by alternative translation initiation; probably both forms are required for correct carboxysome assembly and growth. In this strain both forms are equally abundant. In terms of biological role, a moderately active carbonic anhydrase that catalyzes the reversible hydration of carbon dioxide. Essential to photosynthetic carbon dioxide fixation, supplies CO(2) to ribulose bisphosphate carboxylase (RuBisCO) in the carboxysome. Also hydrolyzes COS. Functionally, beta-carboxysome assembly initiates when soluble RuBisCO is condensed into a liquid matrix in a pre-carboxysome by the RbcS-like domains of probably both forms of CcmM. CcmN interacts with the N-terminus of full length CcmM, and then recruits the shell proteins (CcmK) via CcmN's encapsulation peptide. Shell formation requires both CcmK proteins and CcmO. CcmL caps the otherwise elongated carboxysome. Once fully encapsulated carboxysomes are formed, they migrate within the cell probably via interactions with the cytoskeleton. In Nostoc sp. (strain PCC 7120 / SAG 25.82 / UTEX 2576), this protein is Carboxysome assembly protein CcmM.